The primary structure comprises 837 residues: Protein ROD1 (837 aa).

2 positions are modified to phosphoserine: serine 138 and serine 141. Lysine 401 participates in a covalent cross-link: Glycyl lysine isopeptide (Lys-Gly) (interchain with G-Cter in ubiquitin). Serine 436 is modified (phosphoserine). The PY-motif motif lies at 487–490 (PPNY). Serine 536 is subject to Phosphoserine. Residues 656–659 (PPAY) carry the PY-motif motif. 2 disordered regions span residues 675 to 726 (ERPQ…SVSL) and 763 to 837 (SFTS…RDRS). Positions 685–703 (TSSLLPLPGSSKSSNNLKR) are enriched in low complexity. A compositionally biased stretch (polar residues) spans 716-726 (PRNNSGSSVSL). 2 positions are modified to phosphoserine: serine 720 and serine 725. Over residues 763 to 773 (SFTSNSSSKNN) the composition is skewed to low complexity. Residues 774–792 (SHFDKTDSTSDANKPREEE) show a composition bias toward basic and acidic residues. Residues 805–815 (SSSVRSNNSNS) show a composition bias toward low complexity.

Belongs to the arrestin family. As to quaternary structure, interacts with RSP5 via its 2 PY-motifs.

The protein resides in the membrane. In terms of biological role, mediates resistance to o-dinitrobenzene, calcium and zinc. This is Protein ROD1 (ROD1) from Saccharomyces cerevisiae (strain ATCC 204508 / S288c) (Baker's yeast).